The sequence spans 138 residues: Transcription antitermination protein NusB (138 aa).

This sequence belongs to the NusB family.

Functionally, involved in transcription antitermination. Required for transcription of ribosomal RNA (rRNA) genes. Binds specifically to the boxA antiterminator sequence of the ribosomal RNA (rrn) operons. This chain is Transcription antitermination protein NusB, found in Helicobacter pylori (strain Shi470).